A 379-amino-acid chain; its full sequence is Peritrophin-48 (379 aa).

The first 20 residues, 1–20, serve as a signal peptide directing secretion; the sequence is MKAKTLTATLALILLAFAQA. Chitin-binding type-2 domains are found at residues 25–83 and 86–143; these read ASYC…NCFF and ANPC…NTGN. Intrachain disulfides connect C60–C73 and C120–C133. N150 and N168 each carry an N-linked (GlcNAc...) asparagine glycan. Chitin-binding type-2 domains are found at residues 151–208, 224–283, and 285–356; these read LSVC…ACSR, TSPC…RTLK, and CNRC…ACEN. A disulfide bond links C185 and C198. Residues N247 and N252 are each glycosylated (N-linked (GlcNAc...) asparagine). A disulfide bridge links C324 with C337. N341, N356, and N373 each carry an N-linked (GlcNAc...) asparagine glycan.

In terms of processing, glycosylated. Larval peritrophic membrane.

Functionally, binds chitin and may bind related oligosaccharide structures. The sequence is that of Peritrophin-48 from Chrysomya bezziana (Old world screw-worm fly).